Here is a 587-residue protein sequence, read N- to C-terminus: MRLQILLIYLICIIVSSIVLVESSNKHHFKENDEVPFYVNNVGPYSNPTETYEFYTLPFCKPSSISYKKTKLGEILQGDSAVLSDYQFPFKSSFENKQLCEYTLKKEDIEKFKKAIGEYYYAEMIYDDLPIFSFVGTVDDSDLTNIRYYLYNHIPFEFDYNGDQVIRVNIDTEHIKVIELSDQDEITLKLTYSAKWQPTEHEFSKRMDLYEEFFTKELEIHWLSVMNSFFLVVLLTAFLAIMIMKILKNDYSRYSKTDEEEDSDYQEDYGWKLVHGDVFRFPPYKNVFSAFYGIGWQFISIVCGILALSLFGMFYPNNGGNMYTAGIVLYALTSGISGYQSAKMYKNMGGNKWAWNIVLTATLFVAPLFIVVILSNTVAITWHSTVALPILTMIEVITIWLFVGFPLTVVGGIAGRRLSENFEAPCRTKNFPREVPPIQWYRRLPCQILIAGFLPFSAIYIELFYIFNSVWGHSTYTLYGILCLVFLILINVTVCITVALTYFQLSMEDHKWWWNSFINGGSTVVFIYMYSIYYYYYISHMYGLLQATFYFTYMLIVCFFFFILLGTVGFYSSLIFVKRIYRNLKSD.

The signal sequence occupies residues 1–23 (MRLQILLIYLICIIVSSIVLVES). Transmembrane regions (helical) follow at residues 223-243 (LSVM…AIMI), 294-314 (IGWQ…FGMF), 319-339 (GGNM…ISGY), 354-374 (AWNI…VVIL), 390-410 (ILTM…LTVV), 448-468 (ILIA…YIFN), 480-500 (GILC…TVAL), 524-544 (VVFI…MYGL), and 556-576 (IVCF…SLIF).

This sequence belongs to the nonaspanin (TM9SF) (TC 9.A.2) family.

It localises to the membrane. Functionally, involved in adhesion and phagocytosis of hydrophilic particles. In Dictyostelium discoideum (Social amoeba), this protein is Putative phagocytic receptor 1b (phg1b).